The sequence spans 631 residues: Phosphomethylpyrimidine synthase (631 aa).

Residues Asn-239, Met-268, Tyr-297, His-333, 353-355 (SRG), 394-397 (DGLR), and Glu-433 each bind substrate. Residue His-437 participates in Zn(2+) binding. Residue Tyr-460 participates in substrate binding. His-501 serves as a coordination point for Zn(2+). Cys-581, Cys-584, and Cys-589 together coordinate [4Fe-4S] cluster.

This sequence belongs to the ThiC family. In terms of assembly, homodimer. It depends on [4Fe-4S] cluster as a cofactor.

It catalyses the reaction 5-amino-1-(5-phospho-beta-D-ribosyl)imidazole + S-adenosyl-L-methionine = 4-amino-2-methyl-5-(phosphooxymethyl)pyrimidine + CO + 5'-deoxyadenosine + formate + L-methionine + 3 H(+). It participates in cofactor biosynthesis; thiamine diphosphate biosynthesis. Functionally, catalyzes the synthesis of the hydroxymethylpyrimidine phosphate (HMP-P) moiety of thiamine from aminoimidazole ribotide (AIR) in a radical S-adenosyl-L-methionine (SAM)-dependent reaction. The chain is Phosphomethylpyrimidine synthase from Salmonella arizonae (strain ATCC BAA-731 / CDC346-86 / RSK2980).